Consider the following 1493-residue polypeptide: Mitogen-activated protein kinase kinase kinase 1 (1493 aa).

Low complexity-rich tracts occupy residues 1–23 and 33–42; these read MAAA…ASPE and GSGAPAAGAG. 2 disordered regions span residues 1 to 171 and 222 to 295; these read MAAA…DRPE and LQGE…EETS. At alanine 2 the chain carries N-acetylalanine. Phosphoserine is present on serine 21. Pro residues predominate over residues 84-94; sequence PPCPSTSPSPE. Low complexity-rich tracts occupy residues 95 to 108 and 135 to 151; these read PADA…FQPA and ARSP…APSG. Serine 137 is subject to Phosphoserine. A compositionally biased stretch (basic and acidic residues) spans 152–171; it reads REMENKETLKGLHKMDDRPE. Low complexity predominate over residues 230-257; sequence SAAPAPKGRRSPSPGSSPSGRSGKPESP. Phosphoserine is present on serine 265. A Phosphothreonine modification is found at threonine 275. Residues serine 282, serine 287, and serine 290 each carry the phosphoserine modification. The segment at 328–356 adopts an SWIM-type zinc-finger fold; that stretch reads YRVFIGPQNCSCGRGTFCIHLLFVMLRVF. Residues 433-482 form an RING-type zinc finger; the sequence is CPICLLGMLDEESLTVCEDGCRNKLHHHCMSIWAEECRRNREPLICPLCR. The span at 496–506 shows a compositional bias: polar residues; sequence SSPVDSPTSLR. Disordered regions lie at residues 496 to 524, 866 to 910, 923 to 955, and 992 to 1060; these read SSPV…SQRR, DTLD…LSAS, VGLP…SPLS, and PCKI…ASKN. Residues serine 497, serine 521, and serine 910 each carry the phosphoserine modification. A compositionally biased stretch (low complexity) spans 507–522; sequence GVQQPSSPQQPVAGSQ. Polar residues-rich tracts occupy residues 925 to 940 and 998 to 1014; these read LPSS…TVQT and ASPQ…QRTC. 2 positions are modified to phosphoserine: serine 999 and serine 1024. Positions 1049–1060 are enriched in polar residues; that stretch reads GSTSKLGDASKN. The 266-residue stretch at 1224 to 1489 folds into the Protein kinase domain; it reads WLKGQQIGLG…SRELLKHPVF (266 aa). ATP contacts are provided by residues 1230 to 1238 and lysine 1253; that span reads IGLGAFSSC. Aspartate 1350 functions as the Proton acceptor in the catalytic mechanism. Phosphothreonine; by autocatalysis is present on residues threonine 1381 and threonine 1393.

It belongs to the protein kinase superfamily. STE Ser/Thr protein kinase family. MAP kinase kinase kinase subfamily. As to quaternary structure, binds both upstream activators and downstream substrates in multimolecular complexes through its N-terminus. Oligomerizes after binding MAP4K2 or TRAF2. Interacts (via the kinase catalytic domain) with STK38. Interacts with GRIPAP1. Mg(2+) serves as cofactor. Post-translationally, autophosphorylated. In terms of tissue distribution, most highly expressed in spleen, kidney and lung.

It localises to the membrane. The enzyme catalyses L-seryl-[protein] + ATP = O-phospho-L-seryl-[protein] + ADP + H(+). It carries out the reaction L-threonyl-[protein] + ATP = O-phospho-L-threonyl-[protein] + ADP + H(+). With respect to regulation, activated by autophosphorylation on Thr-1381 and Thr-1393 following oligomerization. In terms of biological role, component of a protein kinase signal transduction cascade. Activates the ERK and JNK kinase pathways by phosphorylation of MAP2K1 and MAP2K4. May phosphorylate the MAPK8/JNK1 kinase. Activates CHUK and IKBKB, the central protein kinases of the NF-kappa-B pathway. The sequence is that of Mitogen-activated protein kinase kinase kinase 1 (Map3k1) from Rattus norvegicus (Rat).